The chain runs to 96 residues: Ribonuclease P protein component 1 (96 aa).

The protein belongs to the eukaryotic/archaeal RNase P protein component 1 family. As to quaternary structure, consists of a catalytic RNA component and at least 5 protein subunits.

The protein resides in the cytoplasm. It catalyses the reaction Endonucleolytic cleavage of RNA, removing 5'-extranucleotides from tRNA precursor.. In terms of biological role, part of ribonuclease P, a protein complex that generates mature tRNA molecules by cleaving their 5'-ends. The chain is Ribonuclease P protein component 1 from Methanococcus maripaludis (strain DSM 14266 / JCM 13030 / NBRC 101832 / S2 / LL).